A 438-amino-acid polypeptide reads, in one-letter code: uncharacterized protein (438 aa).

Positions 1-32 are cleaved as a signal peptide; sequence MARPLLGKTSSVRRRLESLSACSIFFFLRKFC.

This is an uncharacterized protein from Frog virus 3 (isolate Goorha) (FV-3).